The primary structure comprises 522 residues: Terpineol synthase, chloroplastic (522 aa).

Residues Arg-242, Asp-279, Asp-283, Arg-414, and Asn-417 each coordinate (2E)-geranyl diphosphate. Asp-279 and Asp-283 together coordinate Mg(2+). The DDXXD motif motif lies at 279-283; sequence DDVYD. The Mg(2+) site is built by Asn-417, Thr-421, and Glu-425.

It belongs to the terpene synthase family. Tpsb subfamily. Monomer. Requires Mg(2+) as cofactor. It depends on Mn(2+) as a cofactor. As to expression, confined to flowers.

The protein localises to the plastid. Its subcellular location is the chloroplast. It carries out the reaction (2E)-geranyl diphosphate + H2O = (S)-alpha-terpineol + diphosphate. It catalyses the reaction (2E)-geranyl diphosphate = sabinene + diphosphate. The enzyme catalyses (2E)-geranyl diphosphate = beta-myrcene + diphosphate. The catalysed reaction is (2E)-geranyl diphosphate = limonene + diphosphate. It carries out the reaction (2E)-geranyl diphosphate + H2O = 1,8-cineole + diphosphate. It catalyses the reaction (2E)-geranyl diphosphate = alpha-pinene + diphosphate. Its pathway is secondary metabolite biosynthesis; terpenoid biosynthesis. Its function is as follows. Monoterpene synthase (TPS) involved in the biosynthesis of monoterpene natural products of the 'cineole cassette', volatile compounds present in floral scent. Catalyzes the conversion of (2E)-geranyl diphosphate (GPP) into alpha-terpineol and, as minor products, sabinene, beta-myrcene, limonene, alpha-pinene and 1,8-cineole. The sequence is that of Terpineol synthase, chloroplastic from Nicotiana langsdorffii (Langsdorff's tobacco).